The following is a 128-amino-acid chain: Sulfurtransferase TusD (128 aa).

The Cysteine persulfide intermediate role is filled by Cys78.

It belongs to the DsrE/TusD family. Heterohexamer, formed by a dimer of trimers. The hexameric TusBCD complex contains 2 copies each of TusB, TusC and TusD. The TusBCD complex interacts with TusE.

It localises to the cytoplasm. Part of a sulfur-relay system required for 2-thiolation of 5-methylaminomethyl-2-thiouridine (mnm(5)s(2)U) at tRNA wobble positions. Accepts sulfur from TusA and transfers it in turn to TusE. This Buchnera aphidicola subsp. Schizaphis graminum (strain Sg) protein is Sulfurtransferase TusD.